A 312-amino-acid polypeptide reads, in one-letter code: Bark storage protein B (312 aa).

The first 24 residues, 1–24 (MPQQSMQASLRDPIAEIERSNCKI), serve as a signal peptide directing secretion. An N-linked (GlcNAc...) asparagine glycan is attached at N70.

This sequence to wound-inducible poplar endochitinases. In terms of assembly, monomer. In terms of tissue distribution, bark tissue.

In terms of biological role, may play a role in nitrogen storage. This chain is Bark storage protein B (BSP), found in Populus deltoides (Eastern poplar).